Here is a 56-residue protein sequence, read N- to C-terminus: Small ribosomal subunit protein uS14 (56 aa).

The Zn(2+) site is built by Cys21, Cys24, Cys39, and Cys42.

This sequence belongs to the universal ribosomal protein uS14 family. Zinc-binding uS14 subfamily. Part of the 30S ribosomal subunit. Requires Zn(2+) as cofactor.

Its function is as follows. Binds 16S rRNA, required for the assembly of 30S particles. The polypeptide is Small ribosomal subunit protein uS14 (Thermococcus kodakarensis (strain ATCC BAA-918 / JCM 12380 / KOD1) (Pyrococcus kodakaraensis (strain KOD1))).